Reading from the N-terminus, the 95-residue chain is MNVDEEIQKLEEEIHRLGSRQTDGSYKVTFGVLFNDDRCANIFEALVGTLRAAKKRKIVAFEGELLLQGVHDKVEITLRPTPPPPQAAAATAASS.

Met-1 is subject to N-acetylmethionine.

Belongs to the costars family.

The protein is Costars family protein At4g33640 of Arabidopsis thaliana (Mouse-ear cress).